Here is a 620-residue protein sequence, read N- to C-terminus: Chaperone protein HtpG (620 aa).

Residues 1–334 (MTTTDTAPQS…SEDLPLNLSR (334 aa)) are a; substrate-binding. Residues 335-548 (EMLQNNPQLA…GLGPDRALER (214 aa)) are b. Positions 549–620 (MLAQQNRGAA…RLNRLVLRAL (72 aa)) are c.

It belongs to the heat shock protein 90 family. As to quaternary structure, homodimer.

The protein resides in the cytoplasm. Its function is as follows. Molecular chaperone. Has ATPase activity. The sequence is that of Chaperone protein HtpG from Rhodopseudomonas palustris (strain BisB18).